The sequence spans 312 residues: Malate dehydrogenase (312 aa).

Residues 7–13 and D34 each bind NAD(+); that span reads GAAGGIG. Positions 81 and 87 each coordinate substrate. Residues N94 and 117-119 contribute to the NAD(+) site; that span reads ITN. Substrate contacts are provided by N119 and R153. H177 acts as the Proton acceptor in catalysis. Position 227 (M227) interacts with NAD(+).

This sequence belongs to the LDH/MDH superfamily. MDH type 1 family. As to quaternary structure, homodimer.

It carries out the reaction (S)-malate + NAD(+) = oxaloacetate + NADH + H(+). Functionally, catalyzes the reversible oxidation of malate to oxaloacetate. This Escherichia coli (strain ATCC 8739 / DSM 1576 / NBRC 3972 / NCIMB 8545 / WDCM 00012 / Crooks) protein is Malate dehydrogenase.